The primary structure comprises 58 residues: Large ribosomal subunit protein eL24 (58 aa).

Cysteine 6, cysteine 9, cysteine 32, and cysteine 36 together coordinate Zn(2+). Residues cysteine 6 to cysteine 36 form a C4-type zinc finger.

Belongs to the eukaryotic ribosomal protein eL24 family. Part of the 50S ribosomal subunit. Forms a cluster with proteins L3 and L14. The cofactor is Zn(2+).

Binds to the 23S rRNA. The polypeptide is Large ribosomal subunit protein eL24 (Pyrobaculum islandicum (strain DSM 4184 / JCM 9189 / GEO3)).